A 443-amino-acid polypeptide reads, in one-letter code: Porin D (443 aa).

Positions 1-23 (MKVMKWSAIALAVSAGSTQFAVA) are cleaved as a signal peptide. Catalysis depends on residues His-179, Asp-231, and Ser-319.

Belongs to the outer membrane porin (Opr) (TC 1.B.25) family.

Its subcellular location is the cell outer membrane. In terms of biological role, porin with a specificity for basic amino acids. Involved in facilitated diffusion of carbapenem beta-lactam antibiotics, such as imipenem and meropenem. Also possesses serine protease activity. The polypeptide is Porin D (oprD) (Pseudomonas aeruginosa (strain ATCC 15692 / DSM 22644 / CIP 104116 / JCM 14847 / LMG 12228 / 1C / PRS 101 / PAO1)).